We begin with the raw amino-acid sequence, 466 residues long: ATP synthase subunit beta (466 aa).

Glycine 155 to threonine 162 contacts ATP.

This sequence belongs to the ATPase alpha/beta chains family. F-type ATPases have 2 components, CF(1) - the catalytic core - and CF(0) - the membrane proton channel. CF(1) has five subunits: alpha(3), beta(3), gamma(1), delta(1), epsilon(1). CF(0) has three main subunits: a(1), b(2) and c(9-12). The alpha and beta chains form an alternating ring which encloses part of the gamma chain. CF(1) is attached to CF(0) by a central stalk formed by the gamma and epsilon chains, while a peripheral stalk is formed by the delta and b chains.

It localises to the cell inner membrane. It carries out the reaction ATP + H2O + 4 H(+)(in) = ADP + phosphate + 5 H(+)(out). In terms of biological role, produces ATP from ADP in the presence of a proton gradient across the membrane. The catalytic sites are hosted primarily by the beta subunits. This chain is ATP synthase subunit beta, found in Bordetella bronchiseptica (strain ATCC BAA-588 / NCTC 13252 / RB50) (Alcaligenes bronchisepticus).